The following is a 174-amino-acid chain: Peptide deformylase (174 aa).

Fe cation contacts are provided by Cys-94 and His-136. The active site involves Glu-137. Fe cation is bound at residue His-140.

This sequence belongs to the polypeptide deformylase family. Fe(2+) serves as cofactor.

The enzyme catalyses N-terminal N-formyl-L-methionyl-[peptide] + H2O = N-terminal L-methionyl-[peptide] + formate. In terms of biological role, removes the formyl group from the N-terminal Met of newly synthesized proteins. Requires at least a dipeptide for an efficient rate of reaction. N-terminal L-methionine is a prerequisite for activity but the enzyme has broad specificity at other positions. The polypeptide is Peptide deformylase (Maricaulis maris (strain MCS10) (Caulobacter maris)).